The chain runs to 355 residues: 3-dehydroquinate synthase (355 aa).

NAD(+) is bound by residues Glu-71–Lys-76, Gly-105–Asp-109, Thr-129–Ser-130, Lys-142, and Lys-151. Zn(2+) is bound by residues Glu-184, His-246, and His-263.

It belongs to the sugar phosphate cyclases superfamily. Dehydroquinate synthase family. Requires Co(2+) as cofactor. The cofactor is Zn(2+). It depends on NAD(+) as a cofactor.

Its subcellular location is the cytoplasm. The catalysed reaction is 7-phospho-2-dehydro-3-deoxy-D-arabino-heptonate = 3-dehydroquinate + phosphate. The protein operates within metabolic intermediate biosynthesis; chorismate biosynthesis; chorismate from D-erythrose 4-phosphate and phosphoenolpyruvate: step 2/7. Functionally, catalyzes the conversion of 3-deoxy-D-arabino-heptulosonate 7-phosphate (DAHP) to dehydroquinate (DHQ). This Streptococcus thermophilus (strain ATCC BAA-491 / LMD-9) protein is 3-dehydroquinate synthase.